A 231-amino-acid polypeptide reads, in one-letter code: Large ribosomal subunit protein uL1 (231 aa).

It belongs to the universal ribosomal protein uL1 family. Part of the 50S ribosomal subunit.

Binds directly to 23S rRNA. The L1 stalk is quite mobile in the ribosome, and is involved in E site tRNA release. In terms of biological role, protein L1 is also a translational repressor protein, it controls the translation of the L11 operon by binding to its mRNA. This Thiobacillus denitrificans (strain ATCC 25259 / T1) protein is Large ribosomal subunit protein uL1.